The sequence spans 121 residues: Large ribosomal subunit protein bL12 (121 aa).

The protein belongs to the bacterial ribosomal protein bL12 family. Homodimer. Part of the ribosomal stalk of the 50S ribosomal subunit. Forms a multimeric L10(L12)X complex, where L10 forms an elongated spine to which 2 to 4 L12 dimers bind in a sequential fashion. Binds GTP-bound translation factors.

Functionally, forms part of the ribosomal stalk which helps the ribosome interact with GTP-bound translation factors. Is thus essential for accurate translation. The sequence is that of Large ribosomal subunit protein bL12 from Aliivibrio salmonicida (strain LFI1238) (Vibrio salmonicida (strain LFI1238)).